We begin with the raw amino-acid sequence, 105 residues long: Large ribosomal subunit protein uL24 (105 aa).

Belongs to the universal ribosomal protein uL24 family. As to quaternary structure, part of the 50S ribosomal subunit.

Functionally, one of two assembly initiator proteins, it binds directly to the 5'-end of the 23S rRNA, where it nucleates assembly of the 50S subunit. In terms of biological role, one of the proteins that surrounds the polypeptide exit tunnel on the outside of the subunit. This is Large ribosomal subunit protein uL24 from Dictyoglomus thermophilum (strain ATCC 35947 / DSM 3960 / H-6-12).